A 111-amino-acid chain; its full sequence is Iron-sulfur cluster assembly protein CyaY (111 aa).

Belongs to the frataxin family.

Functionally, involved in iron-sulfur (Fe-S) cluster assembly. May act as a regulator of Fe-S biogenesis. The chain is Iron-sulfur cluster assembly protein CyaY from Cupriavidus metallidurans (strain ATCC 43123 / DSM 2839 / NBRC 102507 / CH34) (Ralstonia metallidurans).